Consider the following 428-residue polypeptide: Cell division protein DamX (428 aa).

The disordered stretch occupies residues 1–99; that stretch reads MDEFKPEDEL…KRKKAASKPA (99 aa). At 1-103 the chain is on the cytoplasmic side; the sequence is MDEFKPEDEL…AASKPASRQY (103 aa). Basic and acidic residues-rich tracts occupy residues 7 to 36 and 50 to 64; these read EDEL…ERGE and DDRR…RNEE. Positions 55–87 form a coiled coil; that stretch reads TRAQKERNEEPEIEEEIDESEDETVDEERVERR. Residues 65-82 are compositionally biased toward acidic residues; the sequence is PEIEEEIDESEDETVDEE. Residues 86–95 are compositionally biased toward basic residues; that stretch reads RRPRKRKKAA. Residues 104–124 form a helical membrane-spanning segment; it reads MMMGVGILVLLLLIIGIGSAL. At 125-428 the chain is on the periplasmic side; sequence KAPSTTSSDQ…PLRQVQADLK (304 aa). Disordered stretches follow at residues 149–190 and 226–344; these read TDQA…VATD and EPAT…KSAP. A compositionally biased stretch (polar residues) spans 236–257; sequence GNASRDTAKTQTAERPSTTRPA. Low complexity predominate over residues 288-334; the sequence is PAAPVASTKAPAATSTPAPKETATTAPVQTASPAQTTATPAAGAKTA. Residues 342 to 419 enclose the SPOR domain; it reads SAPSSHYTLQ…VQAKNPWAKP (78 aa).

Belongs to the DamX family. In terms of assembly, interacts in vitro with multiple Fts proteins, including FtsQ and FtsN.

The protein resides in the cell inner membrane. In terms of biological role, non-essential cell division protein. This is Cell division protein DamX from Escherichia coli (strain K12).